Reading from the N-terminus, the 854-residue chain is Envelope glycoprotein B (854 aa).

Positions 1-30 are cleaved as a signal peptide; the sequence is MSKNWFPLLCASVLVVYVSIASSSTGTASG. The Virion surface segment spans residues 31–723; it reads AVTPTSPTEN…EGVVGFIKNP (693 aa). Residues Asn-40, Asn-48, and Asn-60 are each glycosylated (N-linked (GlcNAc...) asparagine; by host). Cystine bridges form between Cys-69-Cys-524, Cys-86-Cys-480, Cys-160-Cys-225, Cys-317-Cys-364, and Cys-546-Cys-583. The segment at 127-133 is involved in fusion and/or binding to host membrane; sequence SYSFIRE. N-linked (GlcNAc...) asparagine; by host glycosylation is present at Asn-183. The interval 212 to 219 is involved in fusion and/or binding to host membrane; it reads GSTWLYTT. Residues Asn-256, Asn-275, Asn-314, Asn-356, Asn-378, Asn-382, Asn-390, Asn-423, Asn-426, Asn-442, Asn-558, and Asn-595 are each glycosylated (N-linked (GlcNAc...) asparagine; by host). 2 hydrophobic membrane proximal region regions span residues 669 to 721 and 700 to 720; these read VEGK…GFIK and VAIG…VGFI. The helical transmembrane segment at 724 to 744 threads the bilayer; sequence FGSFTVILFLLAVLGVIYLIY. At 745–854 the chain is on the intravirion side; sequence MRQKRAYEKP…YQKIQNEYEV (110 aa).

It belongs to the herpesviridae glycoprotein B family. Homotrimer; disulfide-linked. Binds to heparan sulfate proteoglycans. Interacts with gH/gL heterodimer. Post-translationally, a proteolytic cleavage by host furin generates two subunits that remain linked by disulfide bonds.

It localises to the virion membrane. It is found in the host cell membrane. The protein localises to the host endosome membrane. Its subcellular location is the host Golgi apparatus membrane. Envelope glycoprotein that forms spikes at the surface of virion envelope. Essential for the initial attachment to heparan sulfate moieties of the host cell surface proteoglycans. Involved in fusion of viral and cellular membranes leading to virus entry into the host cell. Following initial binding to its host receptors, membrane fusion is mediated by the fusion machinery composed at least of gB and the heterodimer gH/gL. May be involved in the fusion between the virion envelope and the outer nuclear membrane during virion egress. This is Envelope glycoprotein B from Macaca mulatta (Rhesus macaque).